We begin with the raw amino-acid sequence, 309 residues long: SUR7 family protein FMP45 (309 aa).

The Cytoplasmic segment spans residues 1–5 (MIFKR). A helical transmembrane segment spans residues 6–26 (FVNLLVFLFLLGAGLLTFFLI). At 27 to 116 (LSGGRESGTL…YYLSRVGWAM (90 aa)) the chain is on the extracellular side. Asparagine 73 carries N-linked (GlcNAc...) asparagine glycosylation. A helical membrane pass occupies residues 117 to 137 (LLISLFFIVLALVPGFLATFL). The Cytoplasmic portion of the chain corresponds to 138 to 140 (PFK). The helical transmembrane segment at 141-161 (AVPVLYCVLSWLAFFFIILAA) threads the bilayer. The Extracellular segment spans residues 162–188 (CLYTGCYVKARKTFRNSGRSARLGPKN). A helical membrane pass occupies residues 189-209 (FAFIWTSVFLMLVNAIWSTIF). Over 210 to 309 (SATHKAHSTY…GLAGPVTVRD (100 aa)) the chain is Cytoplasmic. Phosphoserine occurs at positions 230 and 232. Threonine 235 is subject to Phosphothreonine. The interval 253-309 (GPITAAPVVGQPQPTTTTTPAGNGKFFQKLKTRKQVPSAELEPAGDGGLAGPVTVRD) is disordered. Over residues 258–274 (APVVGQPQPTTTTTPAG) the composition is skewed to low complexity.

It belongs to the SUR7 family.

It is found in the cell membrane. Involved in sporulation and affects the sphingolipid composition of the plasma membrane. The sequence is that of SUR7 family protein FMP45 (FMP45) from Saccharomyces cerevisiae (strain ATCC 204508 / S288c) (Baker's yeast).